The sequence spans 621 residues: tRNA uridine 5-carboxymethylaminomethyl modification enzyme MnmG (621 aa).

Position 11–16 (11–16 (GAGHAG)) interacts with FAD. 271-285 (GPRYCPSVEDKINRF) lines the NAD(+) pocket.

This sequence belongs to the MnmG family. Homodimer. Heterotetramer of two MnmE and two MnmG subunits. Requires FAD as cofactor.

It localises to the cytoplasm. Its function is as follows. NAD-binding protein involved in the addition of a carboxymethylaminomethyl (cmnm) group at the wobble position (U34) of certain tRNAs, forming tRNA-cmnm(5)s(2)U34. The protein is tRNA uridine 5-carboxymethylaminomethyl modification enzyme MnmG of Cytophaga hutchinsonii (strain ATCC 33406 / DSM 1761 / CIP 103989 / NBRC 15051 / NCIMB 9469 / D465).